The primary structure comprises 172 residues: uncharacterized protein (172 aa).

The PfpI endopeptidase domain maps to 3-171 (KKVAIILTNE…FNREIVNQLN (169 aa)).

The protein belongs to the peptidase C56 family.

This is an uncharacterized protein from Staphylococcus saprophyticus subsp. saprophyticus (strain ATCC 15305 / DSM 20229 / NCIMB 8711 / NCTC 7292 / S-41).